Reading from the N-terminus, the 567-residue chain is Hexose transporter HXT11 (567 aa).

Polar residues predominate over residues 1-22 (MSGVNNTSANELSTTMSNSNSA). A disordered region spans residues 1-45 (MSGVNNTSANELSTTMSNSNSAVGAPSVKTEHGDSKNSLNLDANE). Over 1-56 (MSGVNNTSANELSTTMSNSNSAVGAPSVKTEHGDSKNSLNLDANEPPIDLPQKPLS) the chain is Cytoplasmic. The chain crosses the membrane as a helical span at residues 57 to 77 (AYTTVAILCLMIAFGGFIFGW). Residues 78 to 112 (DTGTISGFVNLSDFIRRFGQKNDKGTYYLSKVRMG) lie on the Extracellular side of the membrane. An N-linked (GlcNAc...) asparagine glycan is attached at asparagine 87. A helical membrane pass occupies residues 113–133 (LIVSIFNIGCAIGGIVLSKVG). Residues 134 to 139 (DIYGRR) are Cytoplasmic-facing. A helical membrane pass occupies residues 140–160 (IGLITVTAIYVVGILIQITSI). Over 161–170 (NKWYQYFIGR) the chain is Extracellular. Residues 171-191 (IISGLGVGGIAVLSPMLISEV) traverse the membrane as a helical segment. Over 192 to 197 (APKHIR) the chain is Cytoplasmic. The chain crosses the membrane as a helical span at residues 198-218 (GTLVQLYQLMGTMGIFLGYCT). Residues 219–232 (NYGTKNYHNATQWR) are Extracellular-facing. Asparagine 227 carries an N-linked (GlcNAc...) asparagine glycan. The helical transmembrane segment at 233-253 (VGLGLCFAWATFMVSGMMFVP) threads the bilayer. At 254–336 (ESPRYLIEVG…IQSLQQLTGD (83 aa)) the chain is on the cytoplasmic side. A helical transmembrane segment spans residues 337-353 (NYFFYYGTTIFKSVGLK). Residues 354-359 (DSFQTS) are Extracellular-facing. The helical transmembrane segment at 360-377 (IIIGVVNFFSSFIAVYTI) threads the bilayer. Over 378–384 (ERFGRRT) the chain is Cytoplasmic. Residues 385 to 405 (CLLWGAASMLCCFAVFASVGV) form a helical membrane-spanning segment. Over 406 to 429 (TKLWPQGSSHQDITSQGAGNCMIV) the chain is Extracellular. A helical membrane pass occupies residues 430–450 (FTMFFIFSFATTWAGGCYVIV). Topologically, residues 451–467 (SETFPLRVKSRGMAIAT) are cytoplasmic. The helical transmembrane segment at 468 to 488 (AANWMWGFLISFFTPFITGAI) threads the bilayer. Asparagine 489 is a topological domain (extracellular). Residues 490 to 510 (FYYGYVFLGCLVFAYFYVFFF) traverse the membrane as a helical segment. The Cytoplasmic portion of the chain corresponds to 511-567 (VPETKGLTLEEVNTMWLEGVPAWKSASWVPPERRTADYDADAIDHDNRPIYKRFFSS).

This sequence belongs to the major facilitator superfamily. Sugar transporter (TC 2.A.1.1) family.

It localises to the membrane. Its function is as follows. Probable glucose transporter. The sequence is that of Hexose transporter HXT11 (HXT11) from Saccharomyces cerevisiae (strain ATCC 204508 / S288c) (Baker's yeast).